A 348-amino-acid chain; its full sequence is 3-keto-steroid reductase (348 aa).

Residues leucine 18, threonine 41, and arginine 47 each contribute to the NADP(+) site. Catalysis depends on proton donor residues serine 180 and tyrosine 203. NADP(+)-binding residues include tyrosine 203, lysine 207, and serine 238. Lysine 207 serves as the catalytic Lowers pKa of active site Tyr.

It belongs to the short-chain dehydrogenases/reductases (SDR) family. ERG27 subfamily.

It carries out the reaction a 3beta-hydroxysteroid + NADP(+) = a 3-oxosteroid + NADPH + H(+). It participates in steroid biosynthesis; zymosterol biosynthesis; zymosterol from lanosterol: step 5/6. Responsible for the reduction of the keto group on the C-3 of sterols. This chain is 3-keto-steroid reductase (ERG27), found in Candida glabrata (strain ATCC 2001 / BCRC 20586 / JCM 3761 / NBRC 0622 / NRRL Y-65 / CBS 138) (Yeast).